The primary structure comprises 310 residues: Oxygen-dependent coproporphyrinogen-III oxidase (310 aa).

Ser-97 contacts substrate. A divalent metal cation-binding residues include His-101 and His-111. His-111 functions as the Proton donor in the catalytic mechanism. 113–115 contacts substrate; it reads NFR. The a divalent metal cation site is built by His-150 and His-180. The important for dimerization stretch occupies residues 245–280; the sequence is YVEFNLLYDRGTRFGLEFGGRTESILMSLPPRVVWR. A substrate-binding site is contributed by 263–265; sequence GGR.

It belongs to the aerobic coproporphyrinogen-III oxidase family. In terms of assembly, homodimer. It depends on a divalent metal cation as a cofactor.

The protein resides in the cytoplasm. The catalysed reaction is coproporphyrinogen III + O2 + 2 H(+) = protoporphyrinogen IX + 2 CO2 + 2 H2O. It functions in the pathway porphyrin-containing compound metabolism; protoporphyrin-IX biosynthesis; protoporphyrinogen-IX from coproporphyrinogen-III (O2 route): step 1/1. Involved in the heme biosynthesis. Catalyzes the aerobic oxidative decarboxylation of propionate groups of rings A and B of coproporphyrinogen-III to yield the vinyl groups in protoporphyrinogen-IX. The sequence is that of Oxygen-dependent coproporphyrinogen-III oxidase from Coxiella burnetii (strain RSA 493 / Nine Mile phase I).